The chain runs to 427 residues: N-acylglucosamine 2-epimerase (427 aa).

Positions 195–216 (LLNLVEQLGEADEELAGKYAEL) are leucine-zipper.

The protein belongs to the N-acylglucosamine 2-epimerase family. Homodimer. Forms a heterodimer with renin and inhibits its activity.

It carries out the reaction an N-acyl-D-glucosamine = an N-acyl-D-mannosamine. The protein operates within amino-sugar metabolism; N-acetylneuraminate degradation. Inhibited by N-ethylmaleimide, 5,5'-dithiobis-2-nitrobenzoate and iodoacetic acid. Catalyzes the interconversion of N-acetylglucosamine to N-acetylmannosamine. Involved in the N-glycolylneuraminic acid (Neu5Gc) degradation pathway: although human is not able to catalyze formation of Neu5Gc due to the inactive CMAHP enzyme, Neu5Gc is present in food and must be degraded. This is N-acylglucosamine 2-epimerase (RENBP) from Homo sapiens (Human).